The chain runs to 412 residues: Putative competence-damage inducible protein (412 aa).

It belongs to the CinA family.

This Bacillus cereus (strain G9842) protein is Putative competence-damage inducible protein.